The chain runs to 355 residues: Protein HGH1 homolog (355 aa).

The tract at residues 324–355 is disordered; it reads DEEGDPTPEEIEQMNKKQKLEDEDAQFETDEI. Composition is skewed to acidic residues over residues 325–335 and 344–355; these read EEGDPTPEEIE and EDEDAQFETDEI.

Belongs to the HGH1 family.

The sequence is that of Protein HGH1 homolog from Dictyostelium discoideum (Social amoeba).